The sequence spans 736 residues: Prospero homeobox protein 1 (736 aa).

The segment covering 103-135 has biased composition (polar residues); it reads KNGGTEPSFQASGLSSTGSEVHQEDVCSNSSRD. Residues 103–146 are disordered; it reads KNGGTEPSFQASGLSSTGSEVHQEDVCSNSSRDSPQECLSPFGR. The Nuclear localization signal motif lies at 163–168; sequence RAKRAR. Disordered regions lie at residues 180 to 220, 261 to 301, 319 to 344, 445 to 465, and 499 to 518; these read PRVA…QQQS, YDST…EMCE, EIGE…HPEG, NSSD…SLHQ, and PSAS…DLTR. Residues 264–274 show a composition bias toward acidic residues; sequence TDSENDEDGNL. Residues 319–335 show a composition bias toward basic and acidic residues; sequence EIGENKPKREGPKEKDQ. Positions 450 to 460 are enriched in low complexity; it reads PASAPPAGGHH. The segment covering 505–518 has biased composition (basic and acidic residues); the sequence is GKERASPESLDLTR. The region spanning 576–634 is the Prospero-type homeo domain; sequence QEGLSPNHLKKAKLMFFYTRYPSSNMLKTYFSDVKFNRCITSQLIKWFSNFREFYYIQM. Residues 576–734 form a homeo-Prospero region; sequence QEGLSPNHLK…KSPNCLQELL (159 aa). One can recognise a Prospero domain in the interval 635-734; it reads EKYARQAIND…KSPNCLQELL (100 aa).

Belongs to the Prospero homeodomain family. Expressed most actively in the developing lens and midgut and at lower levels in the developing brain, heart, muscle and retina.

Its subcellular location is the nucleus. In terms of biological role, transcription factor which may be involved in developmental processes such as cell fate determination, gene transcriptional regulation and progenitor cell regulation in a number of organs. May be essential in the development and function of the eye. May play a role in the regulation of the circadian rhythm by repressing the expression of clock genes. This Gallus gallus (Chicken) protein is Prospero homeobox protein 1 (PROX1).